The chain runs to 448 residues: MTVITRFAPSPTGKLHIGNVRVALVNWLYAQKYNGNFILRIDDTDRDRSKVEYHEAIIKDLQWLGINWNSSFLQSTRFNKYAAAKQYLISSGRLYECYETPEMLEIERKRQLASGYPPIYSRKSLELTTAQKVQLQAEGYKVHYRFLIDRNKPIIWNDLIKGEIKYDGSNVSDPIVIKEDGTMIYMLCSVIDDIEYRISHIIRGEDHITNTAIQIQMFEALGAAIPQLGHLSLIKSDSGKISKRIGGFTIDYLKDQLGIEPMAVNNLLALSGTSNNVDAYFSLESLITKFDLSAFSKSTIIYNENELVTLNHKLLVNTEYDTIKHRLTAIGLPDVTKEFWLAVRHNLNTLNDIKIWWQICYLPTLDKFQEQDAEFLKLAAELLPSGKLTDNSWDDWVQNIIKATNRRGKALFMPLRLALTGITYGPELKYLLPLIGGDEVRARLLRYQ.

A 'HIGH' region motif is present at residues 9-19 (PSPTGKLHIGN). A 'KMSKS' region motif is present at residues 240 to 244 (KISKR). Lys-243 is an ATP binding site.

It belongs to the class-I aminoacyl-tRNA synthetase family. Glutamate--tRNA ligase type 1 subfamily. Monomer.

Its subcellular location is the cytoplasm. The catalysed reaction is tRNA(Glu) + L-glutamate + ATP = L-glutamyl-tRNA(Glu) + AMP + diphosphate. Catalyzes the attachment of glutamate to tRNA(Glu) in a two-step reaction: glutamate is first activated by ATP to form Glu-AMP and then transferred to the acceptor end of tRNA(Glu). This Orientia tsutsugamushi (strain Ikeda) (Rickettsia tsutsugamushi) protein is Glutamate--tRNA ligase 1.